Consider the following 136-residue polypeptide: Large ribosomal subunit protein uL16 (136 aa).

It belongs to the universal ribosomal protein uL16 family. Part of the 50S ribosomal subunit.

Its function is as follows. Binds 23S rRNA and is also seen to make contacts with the A and possibly P site tRNAs. The polypeptide is Large ribosomal subunit protein uL16 (Aliivibrio salmonicida (strain LFI1238) (Vibrio salmonicida (strain LFI1238))).